The sequence spans 194 residues: Putative manganese efflux pump MntP (194 aa).

The next 6 membrane-spanning stretches (helical) occupy residues 3–23 (PITILLIGIAMSTDAFAAAIG), 37–57 (LYVAVIFGVIETATPIAGWLL), 65–85 (IATFDHWIAFGLLSGLGIHMI), 112–132 (LAATALATSIDAAAIGISLAF), 139–159 (IVAAVIGLCTFTMVIFGVMLG), and 170–190 (AEIVGGIILIIVGSTILYEHL).

This sequence belongs to the MntP (TC 9.B.29) family.

Its subcellular location is the cell inner membrane. Functionally, probably functions as a manganese efflux pump. The sequence is that of Putative manganese efflux pump MntP from Xylella fastidiosa (strain 9a5c).